We begin with the raw amino-acid sequence, 386 residues long: Galactokinase (386 aa).

Position 35–38 (35–38 (EHTD)) interacts with substrate. Residues serine 69 and 125-131 (GAGLSSS) each bind ATP. Mg(2+) contacts are provided by serine 131 and glutamate 163. Catalysis depends on aspartate 175, which acts as the Proton acceptor. Tyrosine 224 provides a ligand contact to substrate.

It belongs to the GHMP kinase family. GalK subfamily.

It localises to the cytoplasm. It catalyses the reaction alpha-D-galactose + ATP = alpha-D-galactose 1-phosphate + ADP + H(+). It participates in carbohydrate metabolism; galactose metabolism. Functionally, catalyzes the transfer of the gamma-phosphate of ATP to D-galactose to form alpha-D-galactose-1-phosphate (Gal-1-P). The protein is Galactokinase of Vibrio vulnificus (strain YJ016).